Consider the following 384-residue polypeptide: Cell adhesion molecule CEACAM18 (384 aa).

A signal peptide spans Met1–Gly30. N-linked (GlcNAc...) asparagine glycosylation is found at Asn108, Asn112, Asn121, Asn162, and Asn270. Residues Pro227 to Gln314 form the Ig-like C2-type domain. Cys255 and Cys296 are disulfide-bonded. A disordered region spans residues Gln358–Arg384. The span at Pro359–Met369 shows a compositional bias: polar residues. Over residues Pro373 to Arg384 the composition is skewed to basic and acidic residues.

The protein belongs to the immunoglobulin superfamily. CEA family.

This is Cell adhesion molecule CEACAM18 from Homo sapiens (Human).